A 701-amino-acid polypeptide reads, in one-letter code: DNA ligase 2 (701 aa).

Residues 1–10 (MSPAPQNRQP) show a composition bias toward polar residues. The disordered stretch occupies residues 1 to 21 (MSPAPQNRQPSGVPVGGQFAA). NAD(+) contacts are provided by residues 64-68 (DAEFD), 111-112 (SL), and glutamate 133. Lysine 135 (N6-AMP-lysine intermediate) is an active-site residue. NAD(+) is bound by residues arginine 156, glutamate 189, lysine 302, and lysine 326. Residues cysteine 420, cysteine 423, cysteine 436, and cysteine 441 each coordinate Zn(2+). The segment covering 603–613 (KAAPAAGAKAP) has biased composition (low complexity). Positions 603-623 (KAAPAAGAKAPKLTKPDGKPM) are disordered. In terms of domain architecture, BRCT spans 615–701 (LTKPDGKPMN…FAQMVEDGEV (87 aa)).

This sequence belongs to the NAD-dependent DNA ligase family. LigA subfamily. The cofactor is Mg(2+). Mn(2+) is required as a cofactor.

The enzyme catalyses NAD(+) + (deoxyribonucleotide)n-3'-hydroxyl + 5'-phospho-(deoxyribonucleotide)m = (deoxyribonucleotide)n+m + AMP + beta-nicotinamide D-nucleotide.. In terms of biological role, DNA ligase that catalyzes the formation of phosphodiester linkages between 5'-phosphoryl and 3'-hydroxyl groups in double-stranded DNA using NAD as a coenzyme and as the energy source for the reaction. It is essential for DNA replication and repair of damaged DNA. The sequence is that of DNA ligase 2 from Pseudarthrobacter chlorophenolicus (strain ATCC 700700 / DSM 12829 / CIP 107037 / JCM 12360 / KCTC 9906 / NCIMB 13794 / A6) (Arthrobacter chlorophenolicus).